A 1486-amino-acid polypeptide reads, in one-letter code: Glutamate synthase [NADPH] large chain (1486 aa).

Residues methionine 1 to asparagine 11 constitute a propeptide that is removed on maturation. The active-site Nucleophile is the cysteine 12. Positions cysteine 12–arginine 402 constitute a Glutamine amidotransferase type-2 domain. Leucine 1049–glycine 1101 is a binding site for FMN. Positions 1102, 1108, and 1113 each coordinate [3Fe-4S] cluster.

Belongs to the glutamate synthase family. As to quaternary structure, aggregate of 4 catalytic active heterodimers, consisting of a large and a small subunit. Requires [3Fe-4S] cluster as cofactor. FAD serves as cofactor. FMN is required as a cofactor.

The enzyme catalyses 2 L-glutamate + NADP(+) = L-glutamine + 2-oxoglutarate + NADPH + H(+). The protein operates within amino-acid biosynthesis; L-glutamate biosynthesis via GLT pathway; L-glutamate from 2-oxoglutarate and L-glutamine (NADP(+) route): step 1/1. It participates in energy metabolism; nitrogen metabolism. In terms of biological role, catalyzes the conversion of L-glutamine and 2-oxoglutarate into two molecules of L-glutamate. This chain is Glutamate synthase [NADPH] large chain (gltB), found in Escherichia coli (strain K12).